The following is a 210-amino-acid chain: Kinetochore protein Spc25 (210 aa).

Residues 42 to 106 (TMENIKRQQH…KKKQERDKLI (65 aa)) adopt a coiled-coil conformation.

This sequence belongs to the SPC25 family. Component of the Ndc80 complex, which is composed of Ndc80, Nuf2 and Spc25.

The protein resides in the nucleus. Its subcellular location is the chromosome. It is found in the centromere. The protein localises to the kinetochore. Acts as a component of the essential kinetochore-associated Ndc80 complex, which is required for chromosome segregation and spindle checkpoint activity during meiosis and mitosis. Required for kinetochore integrity and the organization of stable microtubule binding sites in the outer plate of the kinetochore. Participates in SAC signaling that responds specifically to disruptions in spindle microtubule dynamics. The NDC80 complex synergistically enhances the affinity of the SKA1 complex for microtubules and may allow the NDC80 complex to track depolymerizing microtubules. The chain is Kinetochore protein Spc25 from Drosophila virilis (Fruit fly).